Consider the following 393-residue polypeptide: Stearoyl-[acyl-carrier-protein] 9-desaturase, chloroplastic (393 aa).

A chloroplast-targeting transit peptide spans 1–30 (MALNFNSPTFQSIKTTRRPCSPLRSPRVFM). The Fe cation site is built by Glu135, Glu173, His176, Glu226, Glu259, and His262.

It belongs to the fatty acid desaturase type 2 family. In terms of assembly, homodimer. The cofactor is Fe(2+).

The protein localises to the plastid. It is found in the chloroplast. The enzyme catalyses octadecanoyl-[ACP] + 2 reduced [2Fe-2S]-[ferredoxin] + O2 + 2 H(+) = (9Z)-octadecenoyl-[ACP] + 2 oxidized [2Fe-2S]-[ferredoxin] + 2 H2O. The protein operates within lipid metabolism; fatty acid metabolism. Functionally, converts stearoyl-ACP to oleoyl-ACP by introduction of a cis double bond between carbons 9 and 10 of the acyl chain. The sequence is that of Stearoyl-[acyl-carrier-protein] 9-desaturase, chloroplastic from Solanum commersonii (Commerson's wild potato).